An 80-amino-acid polypeptide reads, in one-letter code: Large ribosomal subunit protein uL29 (80 aa).

It belongs to the universal ribosomal protein uL29 family.

The chain is Large ribosomal subunit protein uL29 from Saccharopolyspora erythraea (strain ATCC 11635 / DSM 40517 / JCM 4748 / NBRC 13426 / NCIMB 8594 / NRRL 2338).